The following is a 694-amino-acid chain: Elongation factor G (694 aa).

One can recognise a tr-type G domain in the interval 12–286; the sequence is SKLRNIGIMA…AVVDYLPSPI (275 aa). GTP is bound by residues 21-28, 85-89, and 139-142; these read AHIDAGKT, DTPGH, and NKMD.

Belongs to the TRAFAC class translation factor GTPase superfamily. Classic translation factor GTPase family. EF-G/EF-2 subfamily.

It localises to the cytoplasm. In terms of biological role, catalyzes the GTP-dependent ribosomal translocation step during translation elongation. During this step, the ribosome changes from the pre-translocational (PRE) to the post-translocational (POST) state as the newly formed A-site-bound peptidyl-tRNA and P-site-bound deacylated tRNA move to the P and E sites, respectively. Catalyzes the coordinated movement of the two tRNA molecules, the mRNA and conformational changes in the ribosome. In Pseudothermotoga lettingae (strain ATCC BAA-301 / DSM 14385 / NBRC 107922 / TMO) (Thermotoga lettingae), this protein is Elongation factor G.